We begin with the raw amino-acid sequence, 144 residues long: Cell division protein SepF (144 aa).

It belongs to the SepF family. As to quaternary structure, homodimer. Interacts with FtsZ.

Its subcellular location is the cytoplasm. Cell division protein that is part of the divisome complex and is recruited early to the Z-ring. Probably stimulates Z-ring formation, perhaps through the cross-linking of FtsZ protofilaments. Its function overlaps with FtsA. The protein is Cell division protein SepF of Geobacillus sp. (strain WCH70).